Reading from the N-terminus, the 410-residue chain is Tryptophan synthase beta chain (410 aa).

At lysine 98 the chain carries N6-(pyridoxal phosphate)lysine.

This sequence belongs to the TrpB family. In terms of assembly, tetramer of two alpha and two beta chains. The cofactor is pyridoxal 5'-phosphate.

It catalyses the reaction (1S,2R)-1-C-(indol-3-yl)glycerol 3-phosphate + L-serine = D-glyceraldehyde 3-phosphate + L-tryptophan + H2O. Its pathway is amino-acid biosynthesis; L-tryptophan biosynthesis; L-tryptophan from chorismate: step 5/5. Functionally, the beta subunit is responsible for the synthesis of L-tryptophan from indole and L-serine. This Roseobacter denitrificans (strain ATCC 33942 / OCh 114) (Erythrobacter sp. (strain OCh 114)) protein is Tryptophan synthase beta chain.